We begin with the raw amino-acid sequence, 2007 residues long: Structural maintenance of chromosomes flexible hinge domain-containing protein 1 (2007 aa).

A2 carries the post-translational modification N-acetylalanine. The tract at residues 111 to 702 (TKERIDFLPH…LSVTWPEGDE (592 aa)) is ATPase activity domain. Residue S833 is modified to Phosphoserine. At K1350 the chain carries N6-acetyllysine. K1375 participates in a covalent cross-link: Glycyl lysine isopeptide (Lys-Gly) (interchain with G-Cter in SUMO2). T1500 carries the post-translational modification Phosphothreonine. The region spanning 1721-1848 (GDILGKIAHL…DNLDAANHYR (128 aa)) is the SMC hinge domain. N6-succinyllysine is present on K1803. The residue at position 1975 (S1975) is a Phosphoserine. The disordered stretch occupies residues 1984–2007 (PIPTKRMRRESTRQNRRPKGDVPN).

The protein belongs to the SMC family. Highly divergent. As to quaternary structure, homodimer; homodimerizes via its SMC hinge domain. Interacts with LRIF1. In terms of processing, sumoylated with SUMO1. As to expression, during embryogenesis, specifically expressed in immature olfactory sensory neurons.

It localises to the chromosome. It carries out the reaction ATP + H2O = ADP + phosphate + H(+). Functionally, non-canonical member of the structural maintenance of chromosomes (SMC) protein family that plays a key role in epigenetic silencing by regulating chromatin architecture. Promotes heterochromatin formation in both autosomes and chromosome X, probably by mediating the merge of chromatin compartments. Plays a key role in chromosome X inactivation in females by promoting the spreading of heterochromatin. Recruited to inactivated chromosome X by Xist RNA and acts by mediating the merge of chromatin compartments: promotes random chromatin interactions that span the boundaries of existing structures, leading to create a compartment-less architecture typical of inactivated chromosome X. Required to facilitate Xist RNA spreading. Also required for silencing of a subset of clustered autosomal loci in somatic cells, such as the DUX4 locus. Has ATPase activity; may participate in structural manipulation of chromatin in an ATP-dependent manner as part of its role in gene expression regulation. Also plays a role in DNA repair: localizes to sites of DNA double-strand breaks in response to DNA damage to promote the repair of DNA double-strand breaks. Acts by promoting non-homologous end joining (NHEJ) and inhibiting homologous recombination (HR) repair. Required during preimplantation development, probably acts by regulating chromatin architecture. The polypeptide is Structural maintenance of chromosomes flexible hinge domain-containing protein 1 (Mus musculus (Mouse)).